Consider the following 258-residue polypeptide: MADWDAAQYLKFADERTRPAADLLARVPLAAPARVVDLGCGPGNSTELLVARYPEAAILGLDTSPGMLAEARRRLPGVAFEQADVASLNPEPPPDLLFANAVLQWLPHHASLLPRLARSLAPGGCLAVQMPDNLEEPSHRLMRRVAGEPPFAARLAAAAASRTRIASFSEYDAWLTAAGCTVDIWRTTYVHALAGHRGIVEWVRGTGLRPFLDPLDAEAQAEFLARYEAALAEAYPPQADGRVLLPFPRLFLVARRTR.

This sequence belongs to the methyltransferase superfamily. Tam family.

It is found in the cytoplasm. It carries out the reaction trans-aconitate + S-adenosyl-L-methionine = (E)-3-(methoxycarbonyl)pent-2-enedioate + S-adenosyl-L-homocysteine. In terms of biological role, catalyzes the S-adenosylmethionine monomethyl esterification of trans-aconitate. The chain is Trans-aconitate 2-methyltransferase from Methylobacterium nodulans (strain LMG 21967 / CNCM I-2342 / ORS 2060).